A 137-amino-acid chain; its full sequence is Holo-[acyl-carrier-protein] synthase (137 aa).

Positions 8 and 57 each coordinate Mg(2+).

It belongs to the P-Pant transferase superfamily. AcpS family. Mg(2+) serves as cofactor.

The protein resides in the cytoplasm. It carries out the reaction apo-[ACP] + CoA = holo-[ACP] + adenosine 3',5'-bisphosphate + H(+). Functionally, transfers the 4'-phosphopantetheine moiety from coenzyme A to a Ser of acyl-carrier-protein. This is Holo-[acyl-carrier-protein] synthase from Hyphomonas neptunium (strain ATCC 15444).